Here is a 447-residue protein sequence, read N- to C-terminus: N-succinylarginine dihydrolase (447 aa).

Substrate is bound by residues 19–28, Asn-110, and 137–138; these read AGLSFGNEAS and HR. Glu-174 is an active-site residue. Arg-212 contributes to the substrate binding site. Residue His-248 is part of the active site. Substrate-binding residues include Asp-250 and Asn-359. The active-site Nucleophile is Cys-365.

It belongs to the succinylarginine dihydrolase family. In terms of assembly, homodimer.

It carries out the reaction N(2)-succinyl-L-arginine + 2 H2O + 2 H(+) = N(2)-succinyl-L-ornithine + 2 NH4(+) + CO2. It functions in the pathway amino-acid degradation; L-arginine degradation via AST pathway; L-glutamate and succinate from L-arginine: step 2/5. Catalyzes the hydrolysis of N(2)-succinylarginine into N(2)-succinylornithine, ammonia and CO(2). The polypeptide is N-succinylarginine dihydrolase (Citrobacter koseri (strain ATCC BAA-895 / CDC 4225-83 / SGSC4696)).